We begin with the raw amino-acid sequence, 181 residues long: uncharacterized protein (181 aa).

This is an uncharacterized protein from Sinorhizobium fredii (strain NBRC 101917 / NGR234).